A 672-amino-acid polypeptide reads, in one-letter code: Serine/threonine-protein kinase ppk16 (672 aa).

The region spanning Y31–F279 is the Protein kinase domain. Residues V37–V45 and K60 each bind ATP. The active-site Proton acceptor is the D148. At S231 the chain carries Phosphoserine. Over residues V375–S384 the composition is skewed to polar residues. Disordered regions lie at residues V375–N396, D416–L436, N464–V572, and S632–L672. The segment covering N472–P487 has biased composition (polar residues). Positions S508 to N523 are enriched in low complexity. Residues L531–T541 are compositionally biased toward polar residues. Low complexity-rich tracts occupy residues R549–V572 and S639–S649.

Belongs to the protein kinase superfamily. Ser/Thr protein kinase family.

It localises to the cytoplasm. The catalysed reaction is L-seryl-[protein] + ATP = O-phospho-L-seryl-[protein] + ADP + H(+). The enzyme catalyses L-threonyl-[protein] + ATP = O-phospho-L-threonyl-[protein] + ADP + H(+). In terms of biological role, has a role in meiosis. The chain is Serine/threonine-protein kinase ppk16 (ppk16) from Schizosaccharomyces pombe (strain 972 / ATCC 24843) (Fission yeast).